A 517-amino-acid chain; its full sequence is 2,3-bisphosphoglycerate-independent phosphoglycerate mutase 1 (517 aa).

Residues D17 and S67 each contribute to the Mn(2+) site. The active-site Phosphoserine intermediate is the S67. Residues H128, 158-159 (RD), R190, R196, 267-270 (RPDR), and K340 contribute to the substrate site. Mn(2+) contacts are provided by D407, H411, D448, H449, and H467.

This sequence belongs to the BPG-independent phosphoglycerate mutase family. Mn(2+) serves as cofactor.

The catalysed reaction is (2R)-2-phosphoglycerate = (2R)-3-phosphoglycerate. The protein operates within carbohydrate degradation; glycolysis; pyruvate from D-glyceraldehyde 3-phosphate: step 3/5. Catalyzes the interconversion of 2-phosphoglycerate and 3-phosphoglycerate. In Methanosarcina barkeri (strain Fusaro / DSM 804), this protein is 2,3-bisphosphoglycerate-independent phosphoglycerate mutase 1.